Reading from the N-terminus, the 109-residue chain is MAITDTEFHQLADDMFQAIENAIETAIDEQDADVDIDASGNVLQLEFVDGSKIVINKQEPLHEIWVATRFGGYHFGFVEGKWMDGRNGGEFMPFVQESIERQGGIKLSF.

The protein belongs to the frataxin family.

Functionally, involved in iron-sulfur (Fe-S) cluster assembly. May act as a regulator of Fe-S biogenesis. This chain is Iron-sulfur cluster assembly protein CyaY, found in Shewanella baltica (strain OS155 / ATCC BAA-1091).